A 556-amino-acid polypeptide reads, in one-letter code: Trigger factor (556 aa).

Positions 169-255 constitute a PPIase FKBP-type domain; it reads GDVVVIDFAA…LREIKAKELP (87 aa). Residues 438–452 are compositionally biased toward polar residues; that stretch reads VDSEGNPTQAPTSLA. The segment at 438–556 is disordered; it reads VDSEGNPTQA…KPSKKDKKGK (119 aa). Acidic residues predominate over residues 461 to 472; the sequence is PEAEFEADEPEA. Low complexity-rich tracts occupy residues 486-503 and 511-526; these read ETATGAETDGEAAAAEAE and EASPAETVSASAAEAT.

It belongs to the FKBP-type PPIase family. Tig subfamily.

Its subcellular location is the cytoplasm. It carries out the reaction [protein]-peptidylproline (omega=180) = [protein]-peptidylproline (omega=0). In terms of biological role, involved in protein export. Acts as a chaperone by maintaining the newly synthesized protein in an open conformation. Functions as a peptidyl-prolyl cis-trans isomerase. In Synechococcus sp. (strain JA-2-3B'a(2-13)) (Cyanobacteria bacterium Yellowstone B-Prime), this protein is Trigger factor.